We begin with the raw amino-acid sequence, 289 residues long: ATP synthase gamma chain (289 aa).

The protein belongs to the ATPase gamma chain family. F-type ATPases have 2 components, CF(1) - the catalytic core - and CF(0) - the membrane proton channel. CF(1) has five subunits: alpha(3), beta(3), gamma(1), delta(1), epsilon(1). CF(0) has three main subunits: a, b and c.

It is found in the cell membrane. Functionally, produces ATP from ADP in the presence of a proton gradient across the membrane. The gamma chain is believed to be important in regulating ATPase activity and the flow of protons through the CF(0) complex. In Buchnera aphidicola subsp. Melaphis rhois, this protein is ATP synthase gamma chain.